Consider the following 627-residue polypeptide: Monoterpene synthase like 1, chloroplastic (627 aa).

A chloroplast-targeting transit peptide spans Met1 to Ala50. The Mg(2+) site is built by Asp378, Asp382, and Asp530. Positions Asp378–Asp382 match the DDXXD motif motif.

It belongs to the terpene synthase family. Tpsd subfamily. Mg(2+) is required as a cofactor. Requires Mn(2+) as cofactor.

The protein localises to the plastid. It is found in the chloroplast. It functions in the pathway terpene metabolism; oleoresin biosynthesis. Its pathway is secondary metabolite biosynthesis; terpenoid biosynthesis. Monoterpene synthase (TPS) involved in the biosynthesis of monoterpene natural products included in conifer oleoresin secretions and volatile emissions; these compounds contribute to biotic and abiotic stress defense against herbivores and pathogens. The chain is Monoterpene synthase like 1, chloroplastic from Pinus contorta (Shore pine).